Reading from the N-terminus, the 361-residue chain is BBSome complex member bbs-5 (361 aa).

Belongs to the BBS5 family. As to quaternary structure, part of BBSome complex, that contains at least bbs-1, bbs-2, bbs-4, bbs-5, osm-12, bbs-8/ttc-8 and bbs-9. Interacts with bbs-4 (via C-terminus); the interaction is direct.

Its subcellular location is the cell projection. The protein localises to the cilium membrane. It is found in the cytoplasm. The protein resides in the cytoskeleton. It localises to the cilium basal body. Its subcellular location is the microtubule organizing center. The protein localises to the centrosome. It is found in the centriolar satellite. Component of the BBSome complex. The BBSome complex is thought to function as a coat complex required for sorting of specific membrane proteins to the primary cilia. The BBSome complex is required for ciliogenesis but is dispensable for centriolar satellite function. Required for BBSome complex ciliary localization but not for the proper complex assembly. Required, redundantly with bbs-4, for cilia biogenesis and both the assembly and movement of intraflagellar transport proteins along the ciliary axoneme. Plays a role in the removal of degraded mechanosensory receptors within the cilia. This chain is BBSome complex member bbs-5, found in Caenorhabditis elegans.